A 196-amino-acid polypeptide reads, in one-letter code: ATP-dependent Clp protease proteolytic subunit (196 aa).

Residue serine 101 is the Nucleophile of the active site. Histidine 126 is a catalytic residue.

It belongs to the peptidase S14 family. As to quaternary structure, component of the chloroplastic Clp protease core complex.

It is found in the plastid. The protein localises to the chloroplast stroma. The enzyme catalyses Hydrolysis of proteins to small peptides in the presence of ATP and magnesium. alpha-casein is the usual test substrate. In the absence of ATP, only oligopeptides shorter than five residues are hydrolyzed (such as succinyl-Leu-Tyr-|-NHMec, and Leu-Tyr-Leu-|-Tyr-Trp, in which cleavage of the -Tyr-|-Leu- and -Tyr-|-Trp bonds also occurs).. In terms of biological role, cleaves peptides in various proteins in a process that requires ATP hydrolysis. Has a chymotrypsin-like activity. Plays a major role in the degradation of misfolded proteins. This Citrus sinensis (Sweet orange) protein is ATP-dependent Clp protease proteolytic subunit.